Here is a 616-residue protein sequence, read N- to C-terminus: Chaperone protein HscA homolog (616 aa).

The protein belongs to the heat shock protein 70 family.

In terms of biological role, chaperone involved in the maturation of iron-sulfur cluster-containing proteins. Has a low intrinsic ATPase activity which is markedly stimulated by HscB. In Aliivibrio fischeri (strain MJ11) (Vibrio fischeri), this protein is Chaperone protein HscA homolog.